We begin with the raw amino-acid sequence, 586 residues long: Capsid scaffolding protein (586 aa).

Residues H53, S123, and H142 each act as charge relay system in the active site. The segment covering 251-263 (SEETPENAIKDRS) has biased composition (basic and acidic residues). Disordered regions lie at residues 251 to 288 (SEET…HVPA), 330 to 364 (ARRD…DIWP), 458 to 486 (NKRD…YFPG), and 530 to 586 (SASN…MMAD). Positions 264 to 284 (VSTQTAPSFDISESQQPSGQT) are enriched in polar residues. The tract at residues 312–331 (EDMVYVPFEKYASLLAASAR) is interaction with pAP. Interaction with major capsid protein stretches follow at residues 566–586 (DAQT…MMAD) and 567–586 (AQTK…MMAD).

It belongs to the herpesviridae capsid scaffolding protein family. Homomultimer. Interacts with major capsid protein. In terms of assembly, exists in a monomer-dimer equilibrium with the dimer being the active species. Capsid scaffolding protein is cleaved by assemblin after formation of the spherical procapsid. As a result, the capsid obtains its mature, icosahedral shape. Cleavages occur at two or more sites: release (R-site) and maturation (M-site).

It is found in the host cytoplasm. The protein resides in the host nucleus. It carries out the reaction Cleaves -Ala-|-Ser- and -Ala-|-Ala- bonds in the scaffold protein.. Its function is as follows. Acts as a scaffold protein by binding major capsid protein in the cytoplasm, inducing the nuclear localization of both proteins. Multimerizes in the nucleus such as major capsid protein forms the icosahedral T=16 capsid. Autocatalytic cleavage releases the assembly protein, and subsequently abolishes interaction with major capsid protein. Cleavages products are evicted from the capsid before or during DNA packaging. Functionally, protease that plays an essential role in virion assembly within the nucleus. Catalyzes the cleavage of the assembly protein after formation of the spherical procapsid. By that cleavage, the capsid matures and gains its icosahedral shape. The cleavage sites seem to include -Ala-Ser-, -Ala-Ala-, as well as Ala-Thr bonds. Assemblin and cleavages products are evicted from the capsid before or during DNA packaging. In terms of biological role, plays a major role in capsid assembly. Acts as a scaffold protein by binding major capsid protein. Multimerizes in the nucleus such as major capsid protein forms the icosahedral T=16 capsid. Cleaved by assemblin after capsid completion. The cleavages products are evicted from the capsid before or during DNA packaging. In Gallus gallus (Chicken), this protein is Capsid scaffolding protein.